A 415-amino-acid polypeptide reads, in one-letter code: Coiled-coil domain-containing glutamate-rich protein 1 (415 aa).

Residues 1-11 are compositionally biased toward basic and acidic residues; the sequence is MTQTLDTKEDP. Disordered regions lie at residues 1 to 20, 29 to 64, 133 to 162, 202 to 241, and 255 to 372; these read MTQT…GWAS, FGPR…QQYG, RPPG…SPPV, QEKL…GQED, and PSLV…PLEM. 2 stretches are compositionally biased toward basic residues: residues 31–46 and 135–156; these read PRRR…RPRY and PGRK…RRSA. Coiled-coil stretches lie at residues 197 to 224 and 264 to 366; these read EDMR…STAS and DEEK…EEEN. The span at 211–220 shows a compositional bias: low complexity; sequence ALRAQQAQAA. Residues 275–363 are compositionally biased toward acidic residues; it reads VEEEEEGERE…EGLAEDEQTE (89 aa).

It localises to the nucleus. In terms of biological role, regulator of histone epigenetic modifications and chromatin compaction into the sperm head, required for histone-to-protamine (HTP) transition. HTP is a key event in which somatic histones are first replaced by testis-specific histone variants, then transition proteins (TNPs) are incorporated into the spermatid nucleus, and finally protamines (PRMs) replace the TNPs to promote chromatin condensation. This Bos taurus (Bovine) protein is Coiled-coil domain-containing glutamate-rich protein 1 (CCER1).